The primary structure comprises 939 residues: Isoleucine--tRNA ligase (939 aa).

Positions 59–69 (PYANGDIHIGH) match the 'HIGH' region motif. Glu570 is an L-isoleucyl-5'-AMP binding site. Positions 611-615 (KMSKS) match the 'KMSKS' region motif. Lys614 serves as a coordination point for ATP. Zn(2+) contacts are provided by Cys902, Cys905, Cys922, and Cys925.

The protein belongs to the class-I aminoacyl-tRNA synthetase family. IleS type 1 subfamily. Monomer. Zn(2+) serves as cofactor.

The protein localises to the cytoplasm. It catalyses the reaction tRNA(Ile) + L-isoleucine + ATP = L-isoleucyl-tRNA(Ile) + AMP + diphosphate. Catalyzes the attachment of isoleucine to tRNA(Ile). As IleRS can inadvertently accommodate and process structurally similar amino acids such as valine, to avoid such errors it has two additional distinct tRNA(Ile)-dependent editing activities. One activity is designated as 'pretransfer' editing and involves the hydrolysis of activated Val-AMP. The other activity is designated 'posttransfer' editing and involves deacylation of mischarged Val-tRNA(Ile). The polypeptide is Isoleucine--tRNA ligase (Nitrosomonas europaea (strain ATCC 19718 / CIP 103999 / KCTC 2705 / NBRC 14298)).